The following is a 286-amino-acid chain: 33 kDa chaperonin (286 aa).

2 disulfides stabilise this stretch: C225–C227 and C258–C261.

Belongs to the HSP33 family. Under oxidizing conditions two disulfide bonds are formed involving the reactive cysteines. Under reducing conditions zinc is bound to the reactive cysteines and the protein is inactive.

The protein localises to the cytoplasm. In terms of biological role, redox regulated molecular chaperone. Protects both thermally unfolding and oxidatively damaged proteins from irreversible aggregation. Plays an important role in the bacterial defense system toward oxidative stress. The polypeptide is 33 kDa chaperonin (Shewanella frigidimarina (strain NCIMB 400)).